A 238-amino-acid chain; its full sequence is 2-C-methyl-D-erythritol 4-phosphate cytidylyltransferase (238 aa).

This sequence belongs to the IspD/TarI cytidylyltransferase family. IspD subfamily.

It catalyses the reaction 2-C-methyl-D-erythritol 4-phosphate + CTP + H(+) = 4-CDP-2-C-methyl-D-erythritol + diphosphate. Its pathway is isoprenoid biosynthesis; isopentenyl diphosphate biosynthesis via DXP pathway; isopentenyl diphosphate from 1-deoxy-D-xylulose 5-phosphate: step 2/6. Catalyzes the formation of 4-diphosphocytidyl-2-C-methyl-D-erythritol from CTP and 2-C-methyl-D-erythritol 4-phosphate (MEP). This Alteromonas mediterranea (strain DSM 17117 / CIP 110805 / LMG 28347 / Deep ecotype) protein is 2-C-methyl-D-erythritol 4-phosphate cytidylyltransferase.